Consider the following 356-residue polypeptide: Ferrochelatase (356 aa).

Fe cation contacts are provided by His214 and Glu295.

It belongs to the ferrochelatase family.

It is found in the cytoplasm. It carries out the reaction heme b + 2 H(+) = protoporphyrin IX + Fe(2+). It participates in porphyrin-containing compound metabolism; protoheme biosynthesis; protoheme from protoporphyrin-IX: step 1/1. Its function is as follows. Catalyzes the ferrous insertion into protoporphyrin IX. The protein is Ferrochelatase of Paraburkholderia xenovorans (strain LB400).